The sequence spans 674 residues: Glutaminase kidney isoform, mitochondrial (674 aa).

Residues 1-54 constitute a mitochondrion transit peptide; the sequence is MMRLRGSAMLRELLLRPPAAVGGVLRRTQPLGTLCRRPRGGSRPAAGLVAAARL. Residues 56–123 are disordered; sequence PWWGGGGRAK…PGETDAFGNS (68 aa). Over residues 58–71 the composition is skewed to gly residues; the sequence is WGGGGRAKGPGSGG. Residues 89-101 show a composition bias toward low complexity; the sequence is PPQQQQQQQQQPG. N6-succinyllysine occurs at positions 135 and 169. Ser-291 provides a ligand contact to substrate. Lys-316 is subject to N6-acetyllysine. A highly mobile activation loop region spans residues 320-327; that stretch reads GLRFNKLF. Residues Asn-340, Glu-386, Asn-393, Tyr-419, Tyr-471, and Val-489 each coordinate substrate. 2 ANK repeats span residues 590–619 and 624–653; these read DSRT…VNPF and WNNT…QYTP. The tract at residues 652–674 is disordered; it reads TPQGDSDDGKENQTVHKNLDGLL. Ser-657 bears the Phosphoserine mark. Over residues 658–674 the composition is skewed to basic and acidic residues; the sequence is DDGKENQTVHKNLDGLL.

The protein belongs to the glutaminase family. As to quaternary structure, homotetramer, dimer of dimers. Tetramer composed of 68 and 65 kDa peptides in a 1:3 ratio. Can assemble into higher oligomers (in vitro), but the physiological significance of this is not clear. Interacts with RAF1 and MAP2K2. Interacts with ATCAY; the interaction is direct and may control GLS localization, negatively regulating its activity. Post-translationally, synthesized as a 74-kDa cytosolic precursor which is proteolytically processed by the mitochondrial-processing peptidase (MPP) via a 72-kDa intermediate to yield the mature mitochondrial 68- and 65-kDa subunits. In terms of tissue distribution, kidney, brain, and intestine.

Its subcellular location is the mitochondrion. The protein resides in the cytoplasm. It localises to the cytosol. The protein localises to the mitochondrion matrix. It catalyses the reaction L-glutamine + H2O = L-glutamate + NH4(+). Enzyme activity is increased by phosphate, due to increased kcat and increased substrate affinity. Functionally, catalyzes the first reaction in the primary pathway for the renal catabolism of glutamine. Plays a role in maintaining acid-base homeostasis. Regulates the levels of the neurotransmitter glutamate, the main excitatory neurotransmitter in the brain. This Rattus norvegicus (Rat) protein is Glutaminase kidney isoform, mitochondrial (Gls).